A 316-amino-acid chain; its full sequence is Ribosomal protein L11 methyltransferase (316 aa).

Positions 157, 178, 200, and 243 each coordinate S-adenosyl-L-methionine.

The protein belongs to the methyltransferase superfamily. PrmA family.

It is found in the cytoplasm. The catalysed reaction is L-lysyl-[protein] + 3 S-adenosyl-L-methionine = N(6),N(6),N(6)-trimethyl-L-lysyl-[protein] + 3 S-adenosyl-L-homocysteine + 3 H(+). Its function is as follows. Methylates ribosomal protein L11. In Streptococcus pneumoniae (strain ATCC 700669 / Spain 23F-1), this protein is Ribosomal protein L11 methyltransferase.